We begin with the raw amino-acid sequence, 504 residues long: Probable cytosol aminopeptidase (504 aa).

The Mn(2+) site is built by K272 and D277. K284 is an active-site residue. Mn(2+) contacts are provided by D295, D354, and E356. R358 is an active-site residue.

It belongs to the peptidase M17 family. Mn(2+) is required as a cofactor.

The protein localises to the cytoplasm. It carries out the reaction Release of an N-terminal amino acid, Xaa-|-Yaa-, in which Xaa is preferably Leu, but may be other amino acids including Pro although not Arg or Lys, and Yaa may be Pro. Amino acid amides and methyl esters are also readily hydrolyzed, but rates on arylamides are exceedingly low.. The enzyme catalyses Release of an N-terminal amino acid, preferentially leucine, but not glutamic or aspartic acids.. Functionally, presumably involved in the processing and regular turnover of intracellular proteins. Catalyzes the removal of unsubstituted N-terminal amino acids from various peptides. The protein is Probable cytosol aminopeptidase of Chlorobaculum tepidum (strain ATCC 49652 / DSM 12025 / NBRC 103806 / TLS) (Chlorobium tepidum).